The primary structure comprises 134 residues: Profilin-4 (134 aa).

Cys13 and Cys118 are oxidised to a cystine. Positions 84–100 (AVIRGKKGSGGITIKKT) match the Involved in PIP2 interaction motif. A Phosphothreonine modification is found at Thr114.

The protein belongs to the profilin family. In terms of assembly, occurs in many kinds of cells as a complex with monomeric actin in a 1:1 ratio. Post-translationally, phosphorylated by MAP kinases.

It is found in the cytoplasm. The protein resides in the cytoskeleton. Its function is as follows. Binds to actin and affects the structure of the cytoskeleton. At high concentrations, profilin prevents the polymerization of actin, whereas it enhances it at low concentrations. This is Profilin-4 from Olea europaea (Common olive).